The following is a 1147-amino-acid chain: MKIMEDQINPINIRKQKDLDDNLEEITSENSEIAPADIEKKMLENHAYPSPTQEDFQRAIYVKRDFYIHSIPERKVLNTYDEIKEFRDNKCAGNFKLTESQTLLSNFINPNTPYRGLLMFWGTGVGKSCGAIAIAEKFKHMVEKYGTKIHVLVPGPINKQNFLNEIIKCTGETYTKMFQDKTIVINEAEKNRIRKNALNVVNQYYRIMSYRSFYKKVLGEKIRDKVVTGNKVKLTSRKTETGEFERDISIDRIYSLDNTLLIVDEAHNITGNGEGDAVKKIIDVSKNLKVVFLSATPMKNLADSIVELINYLRPKNYQMERDKIFTSQRGSEMDFKPGGRDYLRKMVRGYVSYLRGADPLTFAERVDIGEIPPGLDFTKVTRCFMLPFQLGVYDNVIATQDDSLDRNSEAVANFVFPGLSKDRNSKNIEGYYGIKGMNEIRNQILNNSETLNRRIASTILSEYEIEDPSNLMYLTDNNSVISGNIFNEKYLKHFSIKFYSALQKINETVYGKRNSGLIFIYLNLVRVGISIFQEVLLMNGYLEYQENTNNYNLKRDTRCYFCDHKYGDHYNLPDDIPKHDFYPATFITVTGKSEEDIEQIPEEKHRILNNVFNNVNNREGKYLKIVIGSRVMNEGITLRNIKEIYILDVHFNLGKVDQAIGRGIRFCTHYGITNEKDPFPKVEVNKYVVSVKNGLSTEEQLYKKAESKYKLIKQVERILQEEAIDCPLNRNGNIFPEEMKRYANCGTKDNPCPAICGYMPCEFKCGDKLLNAKYYDPDRAVYKKITKSELDYSTYNNALASDEIDYSKAKIKEMYKLDFIYTLKDILRYVKKSYPVEKREMFDDFYVYQALNDLIPITGNDFNNFHDTIADKYNRPGYLIYINTYYIFQPFDENENIPMYYRRIFTPPTINKINVKDYIKNTPEYRQHKNLYQLDEEGPIDREYDFDSVQDYYDSRDEFDYVGIIDRESSKRKNGTNSSGDEFKIRRKRPKILSKKRETGIPSFLGAVCSTSKDKKYLASIMKKLNLDENKSDSRMDICDRIKNKLFDLEKYSTNNMTYLIIPSNHPHIPFPLNLKDRVQYIIDQIKRETRSSINPEIKTIKTTGEFNDIDYIYYELYYDSSMDKYQDILTLYGAKKINNDWIIIIK.

The region spanning 108–315 is the Helicase ATP-binding domain; that stretch reads INPNTPYRGL…VELINYLRPK (208 aa). Position 121 to 128 (121 to 128) interacts with ATP; sequence WGTGVGKS. The DEAH box signature appears at 264-267; it reads DEAH.

The protein belongs to the DEAD box helicase family. DEAH subfamily.

It localises to the virion. The enzyme catalyses ATP + H2O = ADP + phosphate + H(+). The chain is Putative ATP-dependent RNA helicase L377 from Acanthamoeba polyphaga (Amoeba).